A 222-amino-acid polypeptide reads, in one-letter code: Deoxyribose-phosphate aldolase (222 aa).

Asp90 serves as the catalytic Proton donor/acceptor. The Schiff-base intermediate with acetaldehyde role is filled by Lys152. Lys181 acts as the Proton donor/acceptor in catalysis.

It belongs to the DeoC/FbaB aldolase family. DeoC type 1 subfamily.

It localises to the cytoplasm. The catalysed reaction is 2-deoxy-D-ribose 5-phosphate = D-glyceraldehyde 3-phosphate + acetaldehyde. It participates in carbohydrate degradation; 2-deoxy-D-ribose 1-phosphate degradation; D-glyceraldehyde 3-phosphate and acetaldehyde from 2-deoxy-alpha-D-ribose 1-phosphate: step 2/2. Functionally, catalyzes a reversible aldol reaction between acetaldehyde and D-glyceraldehyde 3-phosphate to generate 2-deoxy-D-ribose 5-phosphate. The chain is Deoxyribose-phosphate aldolase from Pectobacterium carotovorum subsp. carotovorum (strain PC1).